A 359-amino-acid polypeptide reads, in one-letter code: Protein disulfide-isomerase C17H9.14c (359 aa).

A signal peptide spans 1-19 (MRLPLLSFVIFALFALVFA). Thioredoxin domains follow at residues 20–130 (SGVV…EKTG) and 134–250 (RKIV…KKSG). Residues C51 and C54 each act as nucleophile in the active site. Cystine bridges form between C51/C54 and C170/C173.

It belongs to the protein disulfide isomerase family.

The catalysed reaction is Catalyzes the rearrangement of -S-S- bonds in proteins.. In terms of biological role, participates in the folding of proteins containing disulfide bonds, may be involved in glycosylation, prolyl hydroxylation and triglyceride transfer. This Schizosaccharomyces pombe (strain 972 / ATCC 24843) (Fission yeast) protein is Protein disulfide-isomerase C17H9.14c.